Here is a 355-residue protein sequence, read N- to C-terminus: Lamassu protein LmuA (355 aa).

In terms of biological role, component of antiviral defense system Lamassu type II, composed of LmuA and LmuB. Expression of Lamassu type II in B.subtilis (strain BEST7003) confers resistance to phage SpBeta. May be a nuclease. The protein is Lamassu protein LmuA of Bacillus cereus (strain VD014).